A 361-amino-acid polypeptide reads, in one-letter code: RLA class I histocompatibility antigen, alpha chain 19-1 (361 aa).

The first 24 residues, 1–24 (MGSIPPRTLLLLLAGALTLKDTQA), serve as a signal peptide directing secretion. The tract at residues 25–114 (GSHSMRYFYT…ALRYYNQSAA (90 aa)) is alpha-1. Over 25 to 308 (GSHSMRYFYT…EPPAQPTALI (284 aa)) the chain is Extracellular. Asn110 carries an N-linked (GlcNAc...) asparagine glycan. The alpha-2 stretch occupies residues 115–206 (GSHTFQTMFG…EMGKETLQRA (92 aa)). Intrachain disulfides connect Cys125/Cys188 and Cys227/Cys283. The tract at residues 207–298 (DPPKAHVTHH…GLPEPLTLTW (92 aa)) is alpha-3. The 89-residue stretch at 209–297 (PKAHVTHHPA…EGLPEPLTLT (89 aa)) folds into the Ig-like C1-type domain. The interval 299–308 (EPPAQPTALI) is connecting peptide. Residues 309 to 329 (VGIVAGVLGVLLILGAVVAVV) form a helical membrane-spanning segment. Over 330–361 (RRKKHSSDGKGGRYTPAAGGHRDQGSDDSLMP) the chain is Cytoplasmic. The segment at 335–361 (SSDGKGGRYTPAAGGHRDQGSDDSLMP) is disordered. Residues Ser355 and Ser358 each carry the phosphoserine modification.

It belongs to the MHC class I family. Heterodimer of an alpha chain and a beta chain (beta-2-microglobulin).

Its subcellular location is the membrane. Involved in the presentation of foreign antigens to the immune system. The polypeptide is RLA class I histocompatibility antigen, alpha chain 19-1 (Oryctolagus cuniculus (Rabbit)).